We begin with the raw amino-acid sequence, 203 residues long: Peptidoglycan-recognition protein SA (203 aa).

Positions Met-1–Ala-26 are cleaved as a signal peptide. Cystine bridges form between Cys-37/Cys-160 and Cys-74/Cys-80. The 128-residue stretch at Arg-59–Gly-186 folds into the N-acetylmuramoyl-L-alanine amidase domain. Peptidoglycan binding regions lie at residues Met-87–Tyr-90 and Phe-97–Tyr-102.

Belongs to the N-acetylmuramoyl-L-alanine amidase 2 family. In larvae, it is expressed in fat body. Also expressed in uninduced hemocytes and mbn-2 cells.

The protein localises to the secreted. The catalysed reaction is N-acetyl-D-glucosaminyl-N-acetylmuramoyl-L-alanyl-meso-2,6-diaminoheptanedioyl-D-alanine + H2O = N-acetyl-D-glucosaminyl-N-acetylmuramoyl-L-alanyl-meso-2,6-diaminoheptanedioate + D-alanine. Peptidoglycan-recognition protein that plays a key role in innate immunity by binding to peptidoglycans (PGN) of Gram-positive bacteria and activating the Toll pathway upstream of spz activating enzyme SPE. Has no activity against Gram-negative bacteria and fungi. Shows some partial redundancy with PRPGP-SD in Gram-positive bacteria recognition. May act by forming a complex with GNBP1 that activates the proteolytic cleavage of Spatzle and the subsequent activation of Toll pathway. Binds to diaminopimelic acid-type tetrapeptide PGN (DAP-type PGN) and lysine-type PGN (Lys-type PGN). Has some L,D-carboxypeptidase activity for DAP-type PGN, which are specific to prokaryotes, but not for Lys-type PGN. This chain is Peptidoglycan-recognition protein SA (PGRP-SA), found in Drosophila melanogaster (Fruit fly).